The sequence spans 196 residues: Small ribosomal subunit protein uS5 (196 aa).

Residues 17-80 (FEEKMLFVNR…AVARKNMITV (64 aa)) form the S5 DRBM domain. The disordered stretch occupies residues 164–196 (GTEVRPSLSSDSPAGRSATTEAGEGVADTGGMQ). Residues 170–183 (SLSSDSPAGRSATT) show a composition bias toward polar residues.

Belongs to the universal ribosomal protein uS5 family. As to quaternary structure, part of the 30S ribosomal subunit. Contacts proteins S4 and S8.

In terms of biological role, with S4 and S12 plays an important role in translational accuracy. Located at the back of the 30S subunit body where it stabilizes the conformation of the head with respect to the body. The chain is Small ribosomal subunit protein uS5 from Deinococcus radiodurans (strain ATCC 13939 / DSM 20539 / JCM 16871 / CCUG 27074 / LMG 4051 / NBRC 15346 / NCIMB 9279 / VKM B-1422 / R1).